We begin with the raw amino-acid sequence, 192 residues long: Adenylate kinase (192 aa).

10–15 (GAGKGT) is a binding site for ATP. The segment at 30-59 (STGDMLRTAVAQATEVGKRAKAVMDAGQLV) is NMP. AMP is bound by residues Thr31, Arg36, 57–59 (QLV), 85–88 (GYPR), and Gln92. The LID stretch occupies residues 126-142 (NRVTETVAAGGTVRSDD). Arg127 serves as a coordination point for ATP. Positions 139 and 150 each coordinate AMP. Residue Ala178 participates in ATP binding.

This sequence belongs to the adenylate kinase family. Monomer.

The protein resides in the cytoplasm. The catalysed reaction is AMP + ATP = 2 ADP. The protein operates within purine metabolism; AMP biosynthesis via salvage pathway; AMP from ADP: step 1/1. Functionally, catalyzes the reversible transfer of the terminal phosphate group between ATP and AMP. Plays an important role in cellular energy homeostasis and in adenine nucleotide metabolism. This is Adenylate kinase from Rhizobium meliloti (strain 1021) (Ensifer meliloti).